A 34-amino-acid chain; its full sequence is Photosystem II reaction center protein T (34 aa).

Residues 3–23 form a helical membrane-spanning segment; the sequence is ALVYTFLLVSTLGIIFFAIFF.

This sequence belongs to the PsbT family. In terms of assembly, PSII is composed of 1 copy each of membrane proteins PsbA, PsbB, PsbC, PsbD, PsbE, PsbF, PsbH, PsbI, PsbJ, PsbK, PsbL, PsbM, PsbT, PsbY, PsbZ, Psb30/Ycf12, at least 3 peripheral proteins of the oxygen-evolving complex and a large number of cofactors. It forms dimeric complexes.

The protein localises to the plastid. The protein resides in the chloroplast thylakoid membrane. Found at the monomer-monomer interface of the photosystem II (PS II) dimer, plays a role in assembly and dimerization of PSII. PSII is a light-driven water plastoquinone oxidoreductase, using light energy to abstract electrons from H(2)O, generating a proton gradient subsequently used for ATP formation. This chain is Photosystem II reaction center protein T, found in Atropa belladonna (Belladonna).